Here is a 1921-residue protein sequence, read N- to C-terminus: Mediator of RNA polymerase II transcription subunit 13 (1921 aa).

Residues lysine 220 and lysine 226 each participate in a glycyl lysine isopeptide (Lys-Gly) (interchain with G-Cter in ubiquitin) cross-link. Disordered regions lie at residues 400 to 434 (YEKNGYNSSGSSRNSSISSTSSASSGSGWRMTSRT), 702 to 724 (TQVEGRKGRHDKLPTVISDNSST), and 1485 to 1528 (SPTF…GDVS). A compositionally biased stretch (low complexity) spans 407-427 (SSGSSRNSSISSTSSASSGSG). 2 stretches are compositionally biased toward polar residues: residues 1486-1496 (PTFTSLGSESS) and 1515-1527 (EGITSGSSSQGDV).

The protein belongs to the Mediator complex subunit 13 family. In terms of assembly, component of the Mediator complex. Interacts with CYCC1-2 (CDK8 homolog). In terms of tissue distribution, ubiquitous. Highest expression in the shoot apex.

It is found in the nucleus. Its function is as follows. Component of the Mediator complex, a coactivator involved in the regulated transcription of nearly all RNA polymerase II-dependent genes. Mediator functions as a bridge to convey information from gene-specific regulatory proteins to the basal RNA polymerase II transcription machinery. The Mediator complex, having a compact conformation in its free form, is recruited to promoters by direct interactions with regulatory proteins and serves for the assembly of a functional preinitiation complex with RNA polymerase II and the general transcription factors. Acts closely together with MAB12. Involved in the regulation of embryo patterning and cotyledon organogenesis. May act through transient repression of specific genes such as the ones responsive to auxin. The protein is Mediator of RNA polymerase II transcription subunit 13 (MED13) of Arabidopsis thaliana (Mouse-ear cress).